The sequence spans 484 residues: Probable sphingolipid transporter spinster homolog 2 (484 aa).

Positions 1–23 (MDVDGEGDRGQNPRIMERDSDSI) are disordered. Residues 38–58 (LLFVFCVVNLINYIDRGAIAS) form a helical membrane-spanning segment. N62 and N85 each carry an N-linked (GlcNAc...) asparagine glycan. 11 helical membrane-spanning segments follow: residues 93 to 113 (VLSSAFMVGLLVASPIFASLA), 122 to 142 (IGVGLSIWTLAVIGCGLSFDF), 147 to 167 (ICRMFVGVGEASFVSLAAPFI), 181 to 201 (AVFYMCIPTGYAFGYVYGGVV), 209 to 229 (AAFWGEAILMLPFAVLGFVIK), 273 to 293 (VYVTNILGYIAYNFVLGAYSY), 311 to 331 (IFGGVTVVCGIVGTLSGGVIL), 345 to 362 (LSVSTFIGAIFCFAAFCF), 377 to 397 (LLVFATQGPVNFIVLHCVKPS), 405 to 425 (MSTVSIHIFGDVPSSPLVGVL), and 436 to 456 (SLVLTFVLFPAAAIWSIGIFL). S466 carries the phosphoserine modification.

Belongs to the major facilitator superfamily. Spinster (TC 2.A.1.49) family.

Its subcellular location is the late endosome membrane. It localises to the lysosome membrane. Its function is as follows. Probable sphingolipid transporter that plays a central role in endosomes and/or lysosomes storage. In Arabidopsis thaliana (Mouse-ear cress), this protein is Probable sphingolipid transporter spinster homolog 2.